A 325-amino-acid polypeptide reads, in one-letter code: Tartrate-resistant acid phosphatase type 5 (325 aa).

The N-terminal stretch at 1–21 is a signal peptide; that stretch reads MDTWTLLLVLHTSLLLPWAEG. N-linked (GlcNAc...) asparagine glycans are attached at residues Asn-116 and Asn-147.

In terms of assembly, exists either as monomer or, after proteolytic processing, as a dimer of two chains linked by disulfide bond(s). It depends on Fe cation as a cofactor.

The protein resides in the lysosome. The catalysed reaction is a phosphate monoester + H2O = an alcohol + phosphate. The protein is Tartrate-resistant acid phosphatase type 5 (ACP5) of Oryctolagus cuniculus (Rabbit).